Reading from the N-terminus, the 525-residue chain is Bestrophin homolog 15 (525 aa).

A run of 4 helical transmembrane segments spans residues 36 to 56 (LFMF…NLII), 71 to 91 (FDQN…VTII), 237 to 257 (LAYP…ALIA), and 273 to 293 (ILYP…VVGW).

It belongs to the anion channel-forming bestrophin (TC 1.A.46) family. Calcium-sensitive chloride channel subfamily. Forms oligomers.

The protein localises to the cell membrane. Forms chloride channels. The protein is Bestrophin homolog 15 (best-15) of Caenorhabditis elegans.